Here is a 370-residue protein sequence, read N- to C-terminus: Putative replication factor C small subunit L478 (370 aa).

41–48 is an ATP binding site; it reads GPSGSGKK. Over residues 342-353 the composition is skewed to basic and acidic residues; that stretch reads RNKEPEKSEKTK. A disordered region spans residues 342–370; sequence RNKEPEKSEKTKSKTGKLSRTNSKKTIKN. The span at 354–370 shows a compositional bias: basic residues; the sequence is SKTGKLSRTNSKKTIKN.

Belongs to the activator 1 small subunits family. RfcS subfamily.

Functionally, part of the RFC clamp loader complex which loads the PCNA sliding clamp onto DNA. In Acanthamoeba polyphaga (Amoeba), this protein is Putative replication factor C small subunit L478.